A 125-amino-acid chain; its full sequence is Large ribosomal subunit protein bL12 (125 aa).

The protein belongs to the bacterial ribosomal protein bL12 family. As to quaternary structure, homodimer. Part of the ribosomal stalk of the 50S ribosomal subunit. Forms a multimeric L10(L12)X complex, where L10 forms an elongated spine to which 2 to 4 L12 dimers bind in a sequential fashion. Binds GTP-bound translation factors.

Forms part of the ribosomal stalk which helps the ribosome interact with GTP-bound translation factors. Is thus essential for accurate translation. The sequence is that of Large ribosomal subunit protein bL12 from Francisella tularensis subsp. novicida (strain U112).